A 285-amino-acid polypeptide reads, in one-letter code: Putative sugar uptake protein lp_2503 (285 aa).

The next 9 membrane-spanning stretches (helical) occupy residues 2 to 21 (GILIALIPAIAWGSIGLISG), 31 to 48 (TLGMTMGALVFGLALWAV), 55 to 72 (SKIWLIGIVSGLFWSIGQ), 112 to 134 (GNMYWIGSASVIVLIAGAVLTSL), 147 to 169 (NWGVGIRALILSTIGYAGYTIVV), 179 to 196 (VVMPQAVGMLLGALIWSF), 209 to 228 (NIVTGLVWGIGNLFMFMAMA), 233 to 255 (AVAYSLSQMGIVISTFGSIYLLG), and 264 to 283 (VYVVIGSILVIVGGVALSLM).

This sequence belongs to the GRP transporter (TC 2.A.7.5) family.

It localises to the cell membrane. This is Putative sugar uptake protein lp_2503 from Lactiplantibacillus plantarum (strain ATCC BAA-793 / NCIMB 8826 / WCFS1) (Lactobacillus plantarum).